A 370-amino-acid chain; its full sequence is Neutral protease 2 homolog AFUB_070680 (370 aa).

The first 19 residues, 1-19 (MKVTILASAILALINGALA), serve as a signal peptide directing secretion. Positions 20 to 172 (LPANTPTLDV…PQAIKLLDRR (153 aa)) are excised as a propeptide. Cystine bridges form between C178-C250 and C257-C275. H300 serves as a coordination point for Zn(2+). The active site involves E301. H304 and D315 together coordinate Zn(2+).

Belongs to the peptidase M35 family. The cofactor is Zn(2+).

The protein resides in the secreted. It catalyses the reaction Preferential cleavage of bonds with hydrophobic residues in P1'. Also 3-Asn-|-Gln-4 and 8-Gly-|-Ser-9 bonds in insulin B chain.. In terms of biological role, secreted metalloproteinase that allows assimilation of proteinaceous substrates. Shows high activities on basic nuclear substrates such as histone and protamine. May be involved in virulence. This Aspergillus fumigatus (strain CBS 144.89 / FGSC A1163 / CEA10) (Neosartorya fumigata) protein is Neutral protease 2 homolog AFUB_070680.